The primary structure comprises 205 residues: uncharacterized protein (205 aa).

Positions 51–189 (ANVDAVAILA…KKGFAIDVRL (139 aa)) constitute a Nudix hydrolase domain. Positions 90–111 (GLVDSKESCEDAAIRELREETG) match the Nudix box motif.

It belongs to the Nudix hydrolase family.

Its subcellular location is the cytoplasm. It localises to the nucleus. This is an uncharacterized protein from Schizosaccharomyces pombe (strain 972 / ATCC 24843) (Fission yeast).